Here is a 335-residue protein sequence, read N- to C-terminus: Glycerol-3-phosphate dehydrogenase [NAD(P)+] (335 aa).

4 residues coordinate NADPH: Ser15, Tyr16, His36, and Lys110. Lys110, Gly139, and Thr141 together coordinate sn-glycerol 3-phosphate. Ala143 contacts NADPH. 5 residues coordinate sn-glycerol 3-phosphate: Lys195, Asp248, Ser258, Arg259, and Asn260. Lys195 (proton acceptor) is an active-site residue. Position 259 (Arg259) interacts with NADPH. Residues Val283 and Glu285 each coordinate NADPH.

The protein belongs to the NAD-dependent glycerol-3-phosphate dehydrogenase family.

Its subcellular location is the cytoplasm. The catalysed reaction is sn-glycerol 3-phosphate + NAD(+) = dihydroxyacetone phosphate + NADH + H(+). The enzyme catalyses sn-glycerol 3-phosphate + NADP(+) = dihydroxyacetone phosphate + NADPH + H(+). Its pathway is membrane lipid metabolism; glycerophospholipid metabolism. Its function is as follows. Catalyzes the reduction of the glycolytic intermediate dihydroxyacetone phosphate (DHAP) to sn-glycerol 3-phosphate (G3P), the key precursor for phospholipid synthesis. The sequence is that of Glycerol-3-phosphate dehydrogenase [NAD(P)+] from Mannheimia succiniciproducens (strain KCTC 0769BP / MBEL55E).